Here is a 454-residue protein sequence, read N- to C-terminus: N-acetyl-S-(2-succino)cysteine lyase (454 aa).

106-107 (TT) is a fumarate binding site. H154 functions as the Proton donor/acceptor in the catalytic mechanism. R233 is a binding site for fumarate. The Proton donor/acceptor role is filled by S277. Fumarate is bound by residues T278 and 283–285 (KRN).

Belongs to the lyase 1 family.

The catalysed reaction is N-acetyl-S-(2-succino)-L-cysteine = N-acetyl-L-cysteine + fumarate. The protein operates within amino-acid biosynthesis; L-cysteine biosynthesis. Its function is as follows. Catalyzes the cleavage of N-acetyl-S-(2-succino)cysteine into fumarate and N-acetylcysteine. Is involved in a S-(2-succino)cysteine (2SC) degradation pathway that allows the bacterium to recover cysteine from 2SC and to detoxify 2SC that may be a toxic metabolite. Can also perform the reverse reaction in vitro, and has minor activity against 2SC and other small molecule thiols. This chain is N-acetyl-S-(2-succino)cysteine lyase, found in Dickeya dadantii (strain 3937) (Erwinia chrysanthemi (strain 3937)).